The sequence spans 129 residues: Azurin-1 (129 aa).

The 129-residue stretch at 1 to 129 (AECSVDIAGN…LMKGVLKLVD (129 aa)) folds into the Plastocyanin-like domain. A disulfide bridge links Cys3 with Cys26. The Cu cation site is built by His46, Cys112, His117, and Met121.

Its subcellular location is the periplasm. Transfers electrons from cytochrome c551 to cytochrome oxidase. The protein is Azurin-1 of Alcaligenes xylosoxydans xylosoxydans (Achromobacter xylosoxidans).